A 386-amino-acid polypeptide reads, in one-letter code: Probable magnesium transporter NIPA5 (386 aa).

Over 1–18 (MVYSSGSWRDAYKGMSSD) the chain is Extracellular. The chain crosses the membrane as a helical span at residues 19–39 (NVKGLVLALSSSIFIGASFIV). Over 40 to 61 (KKKGLKKAGASGLRAGSGGYSY) the chain is Cytoplasmic. Transmembrane regions (helical) follow at residues 62–82 (LLEPLWWIGMITMIVGEIANF) and 83–103 (AAYAFAPAILVTPLGALSIII). Residues 104-115 (SASLAHIILQEK) are Cytoplasmic-facing. The helical transmembrane segment at 116–136 (LHTFGILGCALCIVGSVTIVL) threads the bilayer. Residues 137 to 157 (HAPQEQDIVSVLEVWNLATEP) are Extracellular-facing. Residues 158–178 (AFLFYAAAVVGAAIVLIVQFI) traverse the membrane as a helical segment. At 179 to 189 (PLYGQSHVMVY) the chain is on the cytoplasmic side. A helical membrane pass occupies residues 190-210 (IGVCSLIGSLSVMSVKALGIA). The Extracellular segment spans residues 211–220 (LKLTFSGTNQ). A helical membrane pass occupies residues 221-241 (LGYPQTWVFTVIVLFCVITQM). Residues 242–255 (NYLNKALDTFNTAV) lie on the Cytoplasmic side of the membrane. The helical transmembrane segment at 256–276 (VSPIYYVMFTSLTILASVIMF) threads the bilayer. Residues 277–283 (KDWDRQS) are Extracellular-facing. Residues 284 to 304 (GTQIMTELCGFVTILSGTFLL) traverse the membrane as a helical segment. Residues 305 to 386 (HTTTDMVDGE…LRRQESSLRS (82 aa)) are Cytoplasmic-facing. The interval 352 to 386 (RQESAKSPRPARQNKQLEDDLEAVPLRRQESSLRS) is disordered. Positions 376 to 386 (PLRRQESSLRS) are enriched in basic and acidic residues.

This sequence belongs to the NIPA (TC 2.A.7) family. In terms of assembly, homodimer.

The protein localises to the cell membrane. The protein resides in the early endosome. In terms of biological role, acts as a Mg(2+) transporter. Can also transport other divalent cations such as Fe(2+), Sr(2+), Ba(2+), Mn(2+) and Co(2+) but to a much less extent than Mg(2+). This chain is Probable magnesium transporter NIPA5, found in Arabidopsis thaliana (Mouse-ear cress).